The following is an 84-amino-acid chain: Delta-stichotoxin-Sgt3a (84 aa).

An N-terminal signal peptide occupies residues 1–19; it reads MAYLKIVLVALMLVVAVSA. Residues 20-33 constitute a propeptide that is removed on maturation; the sequence is MRLSDQEDQDISVA. 3 disulfides stabilise this stretch: C38–C78, C40–C68, and C61–C79. G84 is a propeptide.

This sequence belongs to the sea anemone sodium channel inhibitory toxin family. Type II subfamily.

The protein localises to the secreted. The protein resides in the nematocyst. In terms of biological role, binds specifically to voltage-gated sodium channels (Nav), thereby delaying their inactivation during signal transduction. This chain is Delta-stichotoxin-Sgt3a, found in Stichodactyla gigantea (Giant carpet anemone).